The following is a 320-amino-acid chain: Cytochrome f (320 aa).

A signal peptide spans 1 to 35; that stretch reads MQTRNTFSWIREEITRSISVSLIIYIITWASISSA. Heme contacts are provided by Y36, C56, C59, and H60. The chain crosses the membrane as a helical span at residues 286–305; sequence VQGLLFFLGSVVLAQIFLVL.

It belongs to the cytochrome f family. As to quaternary structure, the 4 large subunits of the cytochrome b6-f complex are cytochrome b6, subunit IV (17 kDa polypeptide, petD), cytochrome f and the Rieske protein, while the 4 small subunits are PetG, PetL, PetM and PetN. The complex functions as a dimer. It depends on heme as a cofactor.

It localises to the plastid. The protein localises to the chloroplast thylakoid membrane. In terms of biological role, component of the cytochrome b6-f complex, which mediates electron transfer between photosystem II (PSII) and photosystem I (PSI), cyclic electron flow around PSI, and state transitions. This is Cytochrome f (petA) from Arabidopsis thaliana (Mouse-ear cress).